Reading from the N-terminus, the 302-residue chain is Elongation factor Ts (302 aa).

The tract at residues 82–85 (TDFV) is involved in Mg(2+) ion dislocation from EF-Tu.

Belongs to the EF-Ts family.

The protein resides in the cytoplasm. In terms of biological role, associates with the EF-Tu.GDP complex and induces the exchange of GDP to GTP. It remains bound to the aminoacyl-tRNA.EF-Tu.GTP complex up to the GTP hydrolysis stage on the ribosome. The sequence is that of Elongation factor Ts from Nitrosospira multiformis (strain ATCC 25196 / NCIMB 11849 / C 71).